Consider the following 390-residue polypeptide: Flavohemoprotein (390 aa).

An N-acetylserine modification is found at Ser-2. In terms of domain architecture, Globin spans 12–149; sequence PLTPTEINFL…LAQTLIDAEA (138 aa). A heme b-binding site is contributed by His-96. Residues Tyr-106 and Glu-148 each act as charge relay system in the active site. Residues 157-390 are reductase; the sequence is WEEFKDFRVT…EFFGPTDPDC (234 aa). The region spanning 158–263 is the FAD-binding FR-type domain; it reads EEFKDFRVTK…HAPVGTMKYD (106 aa). Residues Tyr-196 and 214–217 contribute to the FAD site; that span reads REYS. Residue 277 to 282 participates in NADP(+) binding; it reads GIGITP. 382–385 contributes to the FAD binding site; sequence FFGP.

The protein belongs to the globin family. Two-domain flavohemoproteins subfamily. This sequence in the C-terminal section; belongs to the flavoprotein pyridine nucleotide cytochrome reductase family. It depends on FAD as a cofactor. Heme b is required as a cofactor.

It localises to the cytoplasm. The catalysed reaction is 2 nitric oxide + NADPH + 2 O2 = 2 nitrate + NADP(+) + H(+). It catalyses the reaction 2 nitric oxide + NADH + 2 O2 = 2 nitrate + NAD(+) + H(+). Functionally, is involved in NO detoxification in an aerobic process, termed nitric oxide dioxygenase (NOD) reaction that utilizes O(2) and NAD(P)H to convert NO to nitrate, which protects the fungus from various noxious nitrogen compounds. Therefore, plays a central role in the inducible response to nitrosative stress. In terms of biological role, in the presence of oxygen and NADH, it has NADH oxidase activity, which leads to the generation of superoxide and H(2)O(2). Under anaerobic conditions, it also exhibits nitric oxide reductase and FAD reductase activities. However, all these reactions are much lower than NOD activity. This Candida norvegensis (Yeast) protein is Flavohemoprotein.